We begin with the raw amino-acid sequence, 553 residues long: Arginine--tRNA ligase (553 aa).

Residues 130 to 140 (ANPTGDLHIGH) carry the 'HIGH' region motif.

Belongs to the class-I aminoacyl-tRNA synthetase family. As to quaternary structure, monomer.

Its subcellular location is the cytoplasm. The enzyme catalyses tRNA(Arg) + L-arginine + ATP = L-arginyl-tRNA(Arg) + AMP + diphosphate. In Staphylococcus aureus (strain MSSA476), this protein is Arginine--tRNA ligase.